We begin with the raw amino-acid sequence, 141 residues long: ATP synthase epsilon chain (141 aa).

This sequence belongs to the ATPase epsilon chain family. As to quaternary structure, F-type ATPases have 2 components, CF(1) - the catalytic core - and CF(0) - the membrane proton channel. CF(1) has five subunits: alpha(3), beta(3), gamma(1), delta(1), epsilon(1). CF(0) has three main subunits: a, b and c.

It is found in the cell inner membrane. Produces ATP from ADP in the presence of a proton gradient across the membrane. This is ATP synthase epsilon chain from Bordetella petrii (strain ATCC BAA-461 / DSM 12804 / CCUG 43448).